Consider the following 388-residue polypeptide: Probable proton-coupled zinc antiporter SLC30A3 (388 aa).

The segment at 1–42 (MEPSPASGGSETTRLVSPRDRSSAGGGLRLKSLFTEPSEPLP) is disordered. The Cytoplasmic portion of the chain corresponds to 1 to 75 (MEPSPASGGS…SPERAQARRQ (75 aa)). Phosphoserine occurs at positions 63 and 66. The chain crosses the membrane as a helical span at residues 76–96 (LYAACVVCFIFMAGEVVGGYL). The Lumenal segment spans residues 97–105 (AHSLAIMTD). Residues 106–126 (AAHLLADIGSMMASLFSLWLS) traverse the membrane as a helical segment. Residues H108 and D112 each contribute to the Zn(2+) site. Topologically, residues 127 to 145 (TRPATRTMTFGWHRSETLG) are cytoplasmic. The chain crosses the membrane as a helical span at residues 146-166 (ALASVVSLWIVTGILLYLAFL). The Lumenal segment spans residues 167–177 (RLLHSDYHIEA). A helical membrane pass occupies residues 178-198 (GAMLLTASIAVCANMIMAFVL). The Cytoplasmic segment spans residues 199-235 (HQTGAPHSHGPRGAEYAPLEEGHGHPLSLGNTSVRAA). Residues 236–256 (FVHVLGDLLQSLGVLAASILI) traverse the membrane as a helical segment. The Zn(2+) site is built by H238 and D242. The Lumenal portion of the chain corresponds to 257–263 (YFKPQYK). The chain crosses the membrane as a helical span at residues 264–284 (VADPISTFLFSICALGSTAPT). Over 285–388 (LRDVLLVLME…CLRCREPPKA (104 aa)) the chain is Cytoplasmic.

This sequence belongs to the cation diffusion facilitator (CDF) transporter (TC 2.A.4) family. SLC30A subfamily. Homodimer. Homodimerization could regulate efficiency of zinc transport. Interacts with TMEM163.

It is found in the cytoplasmic vesicle. It localises to the secretory vesicle. The protein resides in the synaptic vesicle membrane. The protein localises to the synapse. Its subcellular location is the synaptosome. It is found in the late endosome membrane. It localises to the lysosome membrane. It carries out the reaction Zn(2+)(in) + 2 H(+)(out) = Zn(2+)(out) + 2 H(+)(in). Functionally, probable proton-coupled zinc ion antiporter mediating the import of zinc from cytoplasm into synaptic vesicles and participating to cellular zinc ion homeostasis in the brain. This chain is Probable proton-coupled zinc antiporter SLC30A3, found in Rattus norvegicus (Rat).